The chain runs to 507 residues: Fumarate hydratase, mitochondrial (507 aa).

A mitochondrion-targeting transit peptide spans 1-41 (MNRAFCLLARSRRFPRVPSAGAVLSGEAATLPRCAPNVVRM). N6-acetyllysine; alternate occurs at positions 58, 63, and 77. 3 positions are modified to N6-succinyllysine; alternate: Lys-58, Lys-63, and Lys-77. Phosphothreonine is present on Thr-82. N6-acetyllysine is present on Lys-91. 2 positions are modified to N6-acetyllysine; alternate: Lys-112 and Lys-119. Lys-112 and Lys-119 each carry N6-succinyllysine; alternate. Residues 142–144 (SGT), 173–176 (HPND), and 183–185 (SSN) each bind substrate. Position 210 is an N6-acetyllysine (Lys-210). Lys-220 is subject to N6-acetyllysine; alternate. Lys-220 is subject to N6-succinyllysine; alternate. Thr-231 provides a ligand contact to substrate. His-232 (proton donor/acceptor) is an active-site residue. The residue at position 233 (Thr-233) is a Phosphothreonine. Lys-289 bears the N6-acetyllysine; alternate mark. At Lys-289 the chain carries N6-succinyllysine; alternate. Residue Ser-362 is part of the active site. Residues Ser-363 and 368-370 (KVN) contribute to the substrate site. Phosphoserine is present on Ser-363. N6-succinyllysine is present on residues Lys-464 and Lys-470. An N6-acetyllysine modification is found at Lys-499.

Belongs to the class-II fumarase/aspartase family. Fumarase subfamily. As to quaternary structure, homotetramer. Interacts with H2AZ1. In terms of processing, phosphorylation at Thr-233 by PRKDC in response to DNA damage promotes translocation to the nucleus and recruitment to DNA double-strand breaks (DSBs).

The protein localises to the mitochondrion. It is found in the cytoplasm. The protein resides in the cytosol. It localises to the nucleus. Its subcellular location is the chromosome. The catalysed reaction is (S)-malate = fumarate + H2O. It participates in carbohydrate metabolism; tricarboxylic acid cycle; (S)-malate from fumarate: step 1/1. In terms of biological role, catalyzes the reversible stereospecific interconversion of fumarate to L-malate. Experiments in other species have demonstrated that specific isoforms of this protein act in defined pathways and favor one direction over the other. Functionally, catalyzes the hydration of fumarate to L-malate in the tricarboxylic acid (TCA) cycle to facilitate a transition step in the production of energy in the form of NADH. Its function is as follows. Catalyzes the dehydration of L-malate to fumarate. Fumarate metabolism in the cytosol plays a role during urea cycle and arginine metabolism; fumarate being a by-product of the urea cycle and amino-acid catabolism. Also plays a role in DNA repair by promoting non-homologous end-joining (NHEJ). In response to DNA damage and phosphorylation by PRKDC, translocates to the nucleus and accumulates at DNA double-strand breaks (DSBs): acts by catalyzing formation of fumarate, an inhibitor of KDM2B histone demethylase activity, resulting in enhanced dimethylation of histone H3 'Lys-36' (H3K36me2). The chain is Fumarate hydratase, mitochondrial from Rattus norvegicus (Rat).